The following is a 284-amino-acid chain: Type II methyltransferase M1.DpnII (284 aa).

S-adenosyl-L-methionine-binding residues include W17, K21, G46, D62, D177, F178, and D194.

It belongs to the N(4)/N(6)-methyltransferase family. As to quaternary structure, monomer. Homodimer.

The catalysed reaction is a 2'-deoxyadenosine in DNA + S-adenosyl-L-methionine = an N(6)-methyl-2'-deoxyadenosine in DNA + S-adenosyl-L-homocysteine + H(+). Its function is as follows. An alpha subtype methylase that recognizes the double-stranded sequence 5'-GATC-3', methylates A-2 on both strands, and protects the DNA from cleavage by the DpnII endonuclease. The polypeptide is Type II methyltransferase M1.DpnII (Streptococcus pneumoniae).